A 179-amino-acid polypeptide reads, in one-letter code: Probable chorismate pyruvate-lyase (179 aa).

Positions 82, 120, and 165 each coordinate substrate.

The protein belongs to the UbiC family.

It localises to the cytoplasm. The enzyme catalyses chorismate = 4-hydroxybenzoate + pyruvate. It participates in cofactor biosynthesis; ubiquinone biosynthesis. In terms of biological role, removes the pyruvyl group from chorismate, with concomitant aromatization of the ring, to provide 4-hydroxybenzoate (4HB) for the ubiquinone pathway. The protein is Probable chorismate pyruvate-lyase of Vibrio parahaemolyticus serotype O3:K6 (strain RIMD 2210633).